Consider the following 308-residue polypeptide: MNIVFMGTPDFAVPSLQRMIKEYNVTAILTQPDKPKGRGKKMAYSAVKEEGLKHEIPIYQPIKLKDDRDLIEKLKELKPDFIIVVAFGQILTKEVLDIPKYGCINLHASLLPMYRGAAPLNWAIINGEKSSGNTTMLMDVGLDTGDMILKDEVEITNNMTTGELHDILMVRGADLLVKSIEGISKGDIVPEKQGNETFYAKMLDKNIANIDWNKSAEEIHNLVRGLNPWPIAYTDYKNERMKIYETEVLKEKSNKEPGTIIDVSKNGVKVSCKEDVLLIKRVQFPNGKPLTIEQYINGHEIEENIILQ.

109–112 (SLLP) provides a ligand contact to (6S)-5,6,7,8-tetrahydrofolate.

Belongs to the Fmt family.

The enzyme catalyses L-methionyl-tRNA(fMet) + (6R)-10-formyltetrahydrofolate = N-formyl-L-methionyl-tRNA(fMet) + (6S)-5,6,7,8-tetrahydrofolate + H(+). Its function is as follows. Attaches a formyl group to the free amino group of methionyl-tRNA(fMet). The formyl group appears to play a dual role in the initiator identity of N-formylmethionyl-tRNA by promoting its recognition by IF2 and preventing the misappropriation of this tRNA by the elongation apparatus. The sequence is that of Methionyl-tRNA formyltransferase from Clostridium beijerinckii (strain ATCC 51743 / NCIMB 8052) (Clostridium acetobutylicum).